Here is a 489-residue protein sequence, read N- to C-terminus: mRNA cleavage and polyadenylation factor CLP1 (489 aa).

ATP-binding positions include Glu28 and 152 to 157 (YSGKTT).

This sequence belongs to the Clp1 family. Clp1 subfamily. In terms of assembly, component of a pre-mRNA cleavage factor complex. Interacts directly with PCF11.

It localises to the nucleus. Its function is as follows. Required for endonucleolytic cleavage during polyadenylation-dependent pre-mRNA 3'-end formation. The protein is mRNA cleavage and polyadenylation factor CLP1 of Candida albicans (strain SC5314 / ATCC MYA-2876) (Yeast).